Consider the following 460-residue polypeptide: Antizyme inhibitor 2 (460 aa).

Residues 117 to 140 are necessary for polyamine uptake stimulation; that stretch reads QIAQIKYAAKHGIQLLSFDNEMEL.

It belongs to the Orn/Lys/Arg decarboxylase class-II family. ODC antizyme inhibitor subfamily. Monomer. Interacts with OAZ1, OAZ2 and OAZ3; this interaction disrupts the interaction between the antizyme and ODC1. Does not form a heterodimer with ODC1. Post-translationally, ubiquitinated, leading to its proteasomal degradation; a process that is reduced in presence of antizymes. May also be degraded through the lysosomal degradative pathway in a proteasomal-independent manner. Expressed in the neocortex, thalamus, hippocampus, cerebellum, medulla oblongata, gray and white matter. Expressed in neurons, oligodendrocytes, basket, Purkinje and pyramidal cells. Expressed in spermatocytes and Leydig cells of the testis. Expressed in luteal theca cells lining corpus luteum cysts and in hilus cells of the ovary. Expressed in primary and neoplastic mast cells (MC) (at protein level). Highly expressed in brain. Also expressed in testis.

It is found in the nucleus. Its subcellular location is the cytoplasm. It localises to the perinuclear region. The protein resides in the membrane. The protein localises to the cytoplasmic vesicle. It is found in the endoplasmic reticulum-Golgi intermediate compartment. Its subcellular location is the golgi apparatus. It localises to the cis-Golgi network. The protein resides in the trans-Golgi network. The protein localises to the cytoplasmic granule. It is found in the cell projection. Its subcellular location is the axon. It localises to the dendrite. The protein resides in the perikaryon. In terms of biological role, antizyme inhibitor (AZI) protein that positively regulates ornithine decarboxylase (ODC) activity and polyamine uptake. AZI is an enzymatically inactive ODC homolog that counteracts the negative effect of ODC antizymes (AZs) OAZ1, OAZ2 and OAZ3 on ODC activity by competing with ODC for antizyme-binding. Inhibits antizyme-dependent ODC degradation and releases ODC monomers from their inactive complex with antizymes, leading to formation of the catalytically active ODC homodimer and restoring polyamine production. Participates in the morphological integrity of the trans-Golgi network (TGN) and functions as a regulator of intracellular secretory vesicle trafficking. In Homo sapiens (Human), this protein is Antizyme inhibitor 2 (AZIN2).